A 284-amino-acid polypeptide reads, in one-letter code: Bifunctional protein FolD (284 aa).

NADP(+)-binding positions include 165–167 and Ser190; that span reads GRS.

This sequence belongs to the tetrahydrofolate dehydrogenase/cyclohydrolase family. As to quaternary structure, homodimer.

The catalysed reaction is (6R)-5,10-methylene-5,6,7,8-tetrahydrofolate + NADP(+) = (6R)-5,10-methenyltetrahydrofolate + NADPH. The enzyme catalyses (6R)-5,10-methenyltetrahydrofolate + H2O = (6R)-10-formyltetrahydrofolate + H(+). It participates in one-carbon metabolism; tetrahydrofolate interconversion. Functionally, catalyzes the oxidation of 5,10-methylenetetrahydrofolate to 5,10-methenyltetrahydrofolate and then the hydrolysis of 5,10-methenyltetrahydrofolate to 10-formyltetrahydrofolate. In Streptococcus pyogenes serotype M2 (strain MGAS10270), this protein is Bifunctional protein FolD.